The following is a 239-amino-acid chain: Phosphoribosylaminoimidazole-succinocarboxamide synthase (239 aa).

It belongs to the SAICAR synthetase family.

The enzyme catalyses 5-amino-1-(5-phospho-D-ribosyl)imidazole-4-carboxylate + L-aspartate + ATP = (2S)-2-[5-amino-1-(5-phospho-beta-D-ribosyl)imidazole-4-carboxamido]succinate + ADP + phosphate + 2 H(+). Its pathway is purine metabolism; IMP biosynthesis via de novo pathway; 5-amino-1-(5-phospho-D-ribosyl)imidazole-4-carboxamide from 5-amino-1-(5-phospho-D-ribosyl)imidazole-4-carboxylate: step 1/2. The chain is Phosphoribosylaminoimidazole-succinocarboxamide synthase from Acinetobacter baylyi (strain ATCC 33305 / BD413 / ADP1).